Consider the following 376-residue polypeptide: Lipid-A-disaccharide synthase (376 aa).

It belongs to the LpxB family.

The catalysed reaction is a lipid X + a UDP-2-N,3-O-bis[(3R)-3-hydroxyacyl]-alpha-D-glucosamine = a lipid A disaccharide + UDP + H(+). Its pathway is bacterial outer membrane biogenesis; LPS lipid A biosynthesis. Condensation of UDP-2,3-diacylglucosamine and 2,3-diacylglucosamine-1-phosphate to form lipid A disaccharide, a precursor of lipid A, a phosphorylated glycolipid that anchors the lipopolysaccharide to the outer membrane of the cell. This chain is Lipid-A-disaccharide synthase, found in Coxiella burnetii (strain CbuK_Q154) (Coxiella burnetii (strain Q154)).